A 2089-amino-acid chain; its full sequence is Non-reducing polyketide synthase PKS16 (2089 aa).

The interval 8 to 243 (VLFGDQTVDP…IKLPITAAFH (236 aa)) is N-terminal acylcarrier protein transacylase (SAT) domain (SAT). The tract at residues 342–364 (AGIEVSRSTEMQPRQEQRTKPRS) is disordered. The segment covering 354–364 (PRQEQRTKPRS) has biased composition (basic and acidic residues). In terms of domain architecture, Ketosynthase family 3 (KS3) spans 364–793 (SSDIAIIGYA…GGNTSLLIED (430 aa)). Catalysis depends on for beta-ketoacyl synthase activity residues cysteine 536, histidine 671, and histidine 710. The interval 891-1214 (VFLFTGQGSQ…SIANAYNSGV (324 aa)) is malonyl-CoA:ACP transacylase (MAT) domain. A product template (PT) domain region spans residues 1273-1586 (TTCLQVIENE…KRTTLQSLLG (314 aa)). Residues 1276–1408 (LQVIENETFT…CTVMYGDGHQ (133 aa)) form an N-terminal hotdog fold region. Residues 1276-1582 (LQVIENETFT…FQQMKRTTLQ (307 aa)) enclose the PKS/mFAS DH domain. Histidine 1309 serves as the catalytic Proton acceptor; for dehydratase activity. A C-terminal hotdog fold region spans residues 1435–1582 (IHRMLKEMIY…FQQMKRTTLQ (148 aa)). Aspartate 1495 (proton donor; for dehydratase activity) is an active-site residue. The Carrier 1 domain occupies 1617 to 1694 (QSPVAGFSKV…ELRAFFLDKM (78 aa)). Position 1654 is an O-(pantetheine 4'-phosphoryl)serine (serine 1654). The interval 1697–1730 (PQATANDDDSDDSSDDEGPGFSRSQSNSTISTPE) is disordered. Residues 1702-1714 (NDDDSDDSSDDEG) are compositionally biased toward acidic residues. Residues 1718-1728 (SRSQSNSTIST) show a composition bias toward polar residues. The Carrier 2 domain occupies 1729 to 1806 (PEEPDVVNVL…DVQKALGAAP (78 aa)). Serine 1766 is subject to O-(pantetheine 4'-phosphoryl)serine. The interval 1848 to 2083 (LFLLPDGAGS…VVGGNHFSIM (236 aa)) is thioesterase (TE) domain.

It functions in the pathway secondary metabolite biosynthesis. Non-reducing polyketide synthase; part of the gene cluster that mediates the biosynthesis of orcinol depsidone grayanic acid (GRA), the only major secondary metabolite known in C.grayi. The first step consists in the ring and depside synthesis by PKS16 leading to 4-O-demethylsphaerophorin, involving different orcinol-like rings, one with acetyl CoA and the other with octanoyl CoA as the starter. Further depsidone formation by the GRA cluster-specific cytochrome P450 leads to 4-O-demethylgrayanic acid. Finally, the cluster specific O-methyltransferase probably converts the 4-O-demethylgrayanic acid into grayanic acid. The sequence is that of Non-reducing polyketide synthase PKS16 from Cladonia grayi (Gray's cup lichen).